A 177-amino-acid polypeptide reads, in one-letter code: F(420)H(2) dehydrogenase subunit I (177 aa).

A disordered region spans residues 1 to 21 (MGCPEVQDRPGSGYELEETPA). 4Fe-4S ferredoxin-type domains follow at residues 76 to 105 (GLQT…IVKA) and 116 to 145 (WFPQ…SGKE). Cysteine 85, cysteine 88, cysteine 91, cysteine 95, cysteine 125, cysteine 128, cysteine 131, and cysteine 135 together coordinate [4Fe-4S] cluster.

It belongs to the complex I 23 kDa subunit family. As to quaternary structure, the FPO complex is composed of at least 13 different subunits. It depends on [4Fe-4S] cluster as a cofactor.

The enzyme catalyses methanophenazine + reduced coenzyme F420-(gamma-L-Glu)(n) = dihydromethanophenazine + oxidized coenzyme F420-(gamma-L-Glu)(n) + H(+). Its function is as follows. Component of the F(420)H(2) dehydrogenase (FPO complex) which is part of the energy-conserving F(420)H(2):heterodisulfide oxidoreductase system. The membrane-bound electron transfer system of the complex plays an important role in the metabolism of methylotrophic methanogens when the organisms grow on methanol or methylamines. Catalyzes the oxidation of methanophenazine to dihydromethanophenazine. It shuttles electrons from F(420)H(2), via FAD and iron-sulfur (Fe-S) centers, to methanophenazine (an electron carrier in the membrane). It couples the redox reaction to proton translocation (for every two electrons transferred, two hydrogen ions are translocated across the cytoplasmic membrane), and thus conserves the redox energy in a proton gradient. It also catalyzes the oxidation of F(420)H(2) with quinones such as 2,3-dimethyl-1,4-naphthoquinone, 2-methyl-1,4-naphthoquinone and tetramethyl-p-benzoquinone. This Methanosarcina mazei (strain ATCC BAA-159 / DSM 3647 / Goe1 / Go1 / JCM 11833 / OCM 88) (Methanosarcina frisia) protein is F(420)H(2) dehydrogenase subunit I (fpoI).